The following is a 2237-amino-acid chain: Activating signal cointegrator 1 complex subunit 3-like (2237 aa).

Disordered stretches follow at residues 1–48 (MSEE…RGEM), 71–118 (TIEK…KPID), 242–330 (DEEE…SKLI), and 445–472 (EKTI…DEIK). Residues 24–37 (ERNRSELKEPKGEP) are compositionally biased toward basic and acidic residues. Over residues 79–97 (VNSSNDTYSTTKKVKNQNP) the composition is skewed to polar residues. Residues 105–114 (RKSNGNNNNE) are compositionally biased toward low complexity. Acidic residues predominate over residues 242–282 (DEEEEEENLSDFEIRDDDDDDDDVDNNEVDDNNNNDSEAQD). Composition is skewed to basic and acidic residues over residues 312-325 (QKPD…DKNN) and 446-460 (KTIE…DVEM). Residues 440 to 468 (TAATTEKTIEKTESNKKDVEMKQQQQQQQ) are a coiled coil. The Helicase ATP-binding 1 domain maps to 561 to 745 (DCAFKTDNNL…FLRVEPDGVF (185 aa)). 574–581 (APTSSGKT) contacts ATP. A DEAH box motif is present at residues 687 to 690 (DEIH). The Helicase C-terminal 1 domain occupies 755 to 990 (PLEQQYIGIS…TVRDAVNWLG (236 aa)). An SEC63 1 domain is found at 1050-1356 (STELGKVASH…GAEYSLPISF (307 aa)). The Helicase ATP-binding 2 domain maps to 1407 to 1584 (NCMYQSNDNA…WIGATPQTCY (178 aa)). ATP is bound at residue 1420–1427 (APTNSGKT). The short motif at 1526-1529 (DELH) is the DEAH box element. The Helicase C-terminal 2 domain maps to 1657 to 1832 (TLTKPYLVCE…TITKKQDALD (176 aa)). The SEC63 2 domain maps to 1892–2215 (PLNLGIIASY…GCDQEHELNI (324 aa)).

It belongs to the helicase family.

This chain is Activating signal cointegrator 1 complex subunit 3-like (ascc3l), found in Dictyostelium discoideum (Social amoeba).